A 598-amino-acid polypeptide reads, in one-letter code: Proline--tRNA ligase (598 aa).

The protein belongs to the class-II aminoacyl-tRNA synthetase family. ProS type 1 subfamily. In terms of assembly, homodimer.

The protein resides in the cytoplasm. It carries out the reaction tRNA(Pro) + L-proline + ATP = L-prolyl-tRNA(Pro) + AMP + diphosphate. In terms of biological role, catalyzes the attachment of proline to tRNA(Pro) in a two-step reaction: proline is first activated by ATP to form Pro-AMP and then transferred to the acceptor end of tRNA(Pro). As ProRS can inadvertently accommodate and process non-cognate amino acids such as alanine and cysteine, to avoid such errors it has two additional distinct editing activities against alanine. One activity is designated as 'pretransfer' editing and involves the tRNA(Pro)-independent hydrolysis of activated Ala-AMP. The other activity is designated 'posttransfer' editing and involves deacylation of mischarged Ala-tRNA(Pro). The misacylated Cys-tRNA(Pro) is not edited by ProRS. This chain is Proline--tRNA ligase, found in Synechococcus sp. (strain CC9311).